Reading from the N-terminus, the 179-residue chain is Transthyretin-like protein 46 (179 aa).

Positions Met-1–Ala-17 are cleaved as a signal peptide. The disordered stretch occupies residues Arg-144–Phe-179. Over residues Asn-157–Phe-179 the composition is skewed to basic and acidic residues.

This sequence belongs to the nematode transthyretin-like family.

It is found in the secreted. The polypeptide is Transthyretin-like protein 46 (ttr-46) (Caenorhabditis elegans).